The sequence spans 155 residues: Small ribosomal subunit protein uS7cz/uS7cy (155 aa).

The protein belongs to the universal ribosomal protein uS7 family. In terms of assembly, part of the 30S ribosomal subunit.

The protein resides in the plastid. The protein localises to the chloroplast. Its function is as follows. One of the primary rRNA binding proteins, it binds directly to 16S rRNA where it nucleates assembly of the head domain of the 30S subunit. In Daucus carota (Wild carrot), this protein is Small ribosomal subunit protein uS7cz/uS7cy (rps7-A).